Reading from the N-terminus, the 164-residue chain is Phosphopantetheine adenylyltransferase (164 aa).

Position 10 (threonine 10) interacts with substrate. Residues threonine 10–phenylalanine 11 and histidine 18 contribute to the ATP site. Residues lysine 42, leucine 74, and arginine 88 each coordinate substrate. Residues glycine 89 to arginine 91, glutamate 99, and asparagine 124 to threonine 130 contribute to the ATP site.

The protein belongs to the bacterial CoaD family. In terms of assembly, homohexamer. Mg(2+) is required as a cofactor.

The protein localises to the cytoplasm. The enzyme catalyses (R)-4'-phosphopantetheine + ATP + H(+) = 3'-dephospho-CoA + diphosphate. It participates in cofactor biosynthesis; coenzyme A biosynthesis; CoA from (R)-pantothenate: step 4/5. Reversibly transfers an adenylyl group from ATP to 4'-phosphopantetheine, yielding dephospho-CoA (dPCoA) and pyrophosphate. This is Phosphopantetheine adenylyltransferase from Pseudoalteromonas translucida (strain TAC 125).